A 775-amino-acid chain; its full sequence is Rab3 GTPase-activating protein catalytic subunit (775 aa).

Phosphoserine occurs at positions 173, 330, 373, 375, and 384. Residues 324–351 are disordered; that stretch reads DEGKKTSPSDSMTKAYPADAGKAGGQLG. Residues 386 to 414 are disordered; sequence AEDLRGNGQESTKKGGPKDMAPLKPEGRL. The residue at position 458 (S458) is a Phosphoserine.

Belongs to the Rab3-GAP catalytic subunit family. As to quaternary structure, the Rab3 GTPase-activating complex is a heterodimer composed of Rab3gap1 and Rab3gap2. The Rab3 GTPase-activating complex interacts with DMXL2. Interacts with LMAN1.

It is found in the cytoplasm. Its subcellular location is the endoplasmic reticulum. The protein localises to the golgi apparatus. It localises to the cis-Golgi network. In terms of biological role, catalytic subunit of the Rab3 GTPase-activating (Rab3GAP) complex composed of RAB3GAP1 and RAB3GAP2, which has GTPase-activating protein (GAP) activity towards various Rab3 subfamily members (RAB3A, RAB3B, RAB3C and RAB3D), RAB5A and RAB43, and guanine nucleotide exchange factor (GEF) activity towards RAB18. As part of the Rab3GAP complex, acts as a GAP for Rab3 proteins by converting active RAB3-GTP to the inactive form RAB3-GDP. Rab3 proteins are involved in regulated exocytosis of neurotransmitters and hormones. The Rab3GAP complex, acts as a GEF for RAB18 by promoting the conversion of inactive RAB18-GDP to the active form RAB18-GTP. Recruits and stabilizes RAB18 at the cis-Golgi membrane where RAB18 is most likely activated. Also involved in RAB18 recruitment at the endoplasmic reticulum (ER) membrane where it maintains proper ER structure. Required for normal eye and brain development. May participate in neurodevelopmental processes such as proliferation, migration and differentiation before synapse formation, and non-synaptic vesicular release of neurotransmitters. The polypeptide is Rab3 GTPase-activating protein catalytic subunit (Rattus norvegicus (Rat)).